Here is a 610-residue protein sequence, read N- to C-terminus: Aspartate--tRNA(Asp/Asn) ligase (610 aa).

E196 contacts L-aspartate. The interval 220–223 is aspartate; the sequence is QIFK. Residue R242 coordinates L-aspartate. Residues 242 to 244 and Q251 contribute to the ATP site; that span reads RDE. L-aspartate is bound at residue H465. An ATP-binding site is contributed by E499. Position 506 (R506) interacts with L-aspartate. 551–554 contacts ATP; it reads GMDR.

Belongs to the class-II aminoacyl-tRNA synthetase family. Type 1 subfamily. Homodimer.

It is found in the cytoplasm. It carries out the reaction tRNA(Asx) + L-aspartate + ATP = L-aspartyl-tRNA(Asx) + AMP + diphosphate. Functionally, aspartyl-tRNA synthetase with relaxed tRNA specificity since it is able to aspartylate not only its cognate tRNA(Asp) but also tRNA(Asn). Reaction proceeds in two steps: L-aspartate is first activated by ATP to form Asp-AMP and then transferred to the acceptor end of tRNA(Asp/Asn). The sequence is that of Aspartate--tRNA(Asp/Asn) ligase from Nitratidesulfovibrio vulgaris (strain ATCC 29579 / DSM 644 / CCUG 34227 / NCIMB 8303 / VKM B-1760 / Hildenborough) (Desulfovibrio vulgaris).